The following is a 358-amino-acid chain: Uroporphyrinogen decarboxylase (358 aa).

Residues 29–33 (RQAGR), aspartate 79, tyrosine 156, threonine 211, and histidine 329 each bind substrate.

The protein belongs to the uroporphyrinogen decarboxylase family. In terms of assembly, homodimer.

The protein resides in the cytoplasm. The enzyme catalyses uroporphyrinogen III + 4 H(+) = coproporphyrinogen III + 4 CO2. The protein operates within porphyrin-containing compound metabolism; protoporphyrin-IX biosynthesis; coproporphyrinogen-III from 5-aminolevulinate: step 4/4. Its function is as follows. Catalyzes the decarboxylation of four acetate groups of uroporphyrinogen-III to yield coproporphyrinogen-III. The protein is Uroporphyrinogen decarboxylase of Idiomarina loihiensis (strain ATCC BAA-735 / DSM 15497 / L2-TR).